Reading from the N-terminus, the 748-residue chain is Protein REPRESSOR OF SILENCING 3 (748 aa).

Positions 10 to 86 (VRLHVGGLGE…GRLRLEKAKE (77 aa)) constitute an RRM domain. Disordered regions lie at residues 244–318 (KSIL…QSID), 350–531 (GSSK…VSDT), 579–600 (VDEE…GGSS), and 729–748 (EWAK…NSEE). Residues 266 to 288 (THPSKNRQTISLEETGRQESSQA) are compositionally biased toward polar residues. Over residues 294–314 (KPSEVVPDKSSDEPSRTKDLE) the composition is skewed to basic and acidic residues. Positions 373–382 (LKKKTKRKRV) are enriched in basic residues. 3 stretches are compositionally biased toward acidic residues: residues 403-416 (DTMA…DSDA), 439-472 (DDSD…DAVE), and 491-518 (ESDD…DVGS). Residues 520 to 531 (DSGSLADTVSDT) show a composition bias toward polar residues.

Ubiquitously expressed.

It is found in the nucleus. The protein localises to the nucleolus. Its subcellular location is the nucleoplasm. Its function is as follows. RNA-binding protein required for DNA demethylation and to eluviate siRNA-mediated transcriptional gene silencing (TGS), probably by guiding ROS1. Can bind specifically single stranded G-rich RNAs of 21-, 24- or 26-nt corresponding to promoter sequence of target genes; this interaction directs demethylation of target sequences. The sequence is that of Protein REPRESSOR OF SILENCING 3 from Arabidopsis thaliana (Mouse-ear cress).